Reading from the N-terminus, the 206-residue chain is Large ribosomal subunit protein mL40 (206 aa).

The transit peptide at 1 to 46 (MATGVMLCAARALRPRSWIPGTCQAHVRHTHQRASLLAFWDLIPMR) directs the protein to the mitochondrion. Residues 170 to 189 (PFEKEGPHYTPPISNYQAPE) form a disordered region.

The protein belongs to the mitochondrion-specific ribosomal protein mL40 family. Component of the mitochondrial ribosome large subunit (39S) which comprises a 16S rRNA and about 50 distinct proteins. In terms of tissue distribution, ubiquitous.

The protein resides in the mitochondrion. In Mus musculus (Mouse), this protein is Large ribosomal subunit protein mL40 (Mrpl40).